Consider the following 477-residue polypeptide: Octopamine receptor (477 aa).

Residues 1–55 lie on the Extracellular side of the membrane; sequence MGQAATHVDANYTLINYTEEVIEDDRDACAVADDPKYPSSFGITLAVPEWEAICT. N-linked (GlcNAc...) asparagine glycosylation is found at Asn11 and Asn16. A helical membrane pass occupies residues 56 to 78; sequence AIVLTLIIISTIVGNILVILSVF. The Cytoplasmic portion of the chain corresponds to 79 to 88; sequence TYKPLRIVQN. Residues 89–110 traverse the membrane as a helical segment; sequence FFIVSLAVADLTVAILVLPLNV. Residues 111–127 are Extracellular-facing; sequence AYSILGQWVFGIYVCKM. Residues 128–148 traverse the membrane as a helical segment; it reads WLTCDIMCCTSSILNLCAIAL. The Cytoplasmic portion of the chain corresponds to 149–168; sequence DRYWAITDPINYAQKRTLER. The helical transmembrane segment at 169-191 threads the bilayer; sequence VLLMIGVVWVLSLIISSPPLLGW. At 192 to 216 the chain is on the extracellular side; the sequence is NDWPDVFEPDTPCRLTSQPGFVIFS. A helical transmembrane segment spans residues 217 to 238; that stretch reads SSGSFYIPLVIMTVVYFEIYLA. The Cytoplasmic portion of the chain corresponds to 239–405; it reads TKKRLRDRAK…LTRERRAART (167 aa). Disordered regions lie at residues 256–317 and 334–358; these read SSGQ…SKDD and VTDM…THED. Composition is skewed to basic and acidic residues over residues 263-272 and 279-295; these read NNKDDHHDQD and NHNE…DNEK. A compositionally biased stretch (basic residues) spans 296 to 312; the sequence is KKRTRKLTPKKKPKRKY. Residues 406–427 traverse the membrane as a helical segment; sequence LGIIMGVFVVCWLPFFVIYLVI. Topologically, residues 428–439 are extracellular; sequence PFCASCCLSNKF. Residues 440–460 traverse the membrane as a helical segment; sequence INFITWLGYCNSALNPLIYTI. At 461–477 the chain is on the cytoplasmic side; that stretch reads FNMDFRRAFKKLLCMKP.

It belongs to the G-protein coupled receptor 1 family.

The protein localises to the cell membrane. Its function is as follows. Receptor for octopamine. Octopamine (OA) is a neurotransmitter, neurohormone, and neuromodulator in invertebrates. The activity of this receptor is mediated by G proteins which activate adenylyl cyclase. The sequence is that of Octopamine receptor from Heliothis virescens (Tobacco budworm moth).